Reading from the N-terminus, the 339-residue chain is NADH-quinone oxidoreductase subunit H (339 aa).

Helical transmembrane passes span 9 to 29 (IFPL…LILC), 50 to 70 (PNVV…KLLF), 82 to 102 (ILFV…WAVI), 115 to 135 (VGVL…IIAG), 161 to 181 (MGLV…SQIV), 187 to 207 (MPWW…ISVL), 235 to 255 (MGFA…SAMT), 275 to 295 (IPGF…FLWI), and 311 to 331 (GWKV…SVLI).

The protein belongs to the complex I subunit 1 family. As to quaternary structure, NDH-1 is composed of 14 different subunits. Subunits NuoA, H, J, K, L, M, N constitute the membrane sector of the complex.

It localises to the cell inner membrane. The catalysed reaction is a quinone + NADH + 5 H(+)(in) = a quinol + NAD(+) + 4 H(+)(out). NDH-1 shuttles electrons from NADH, via FMN and iron-sulfur (Fe-S) centers, to quinones in the respiratory chain. The immediate electron acceptor for the enzyme in this species is believed to be ubiquinone. Couples the redox reaction to proton translocation (for every two electrons transferred, four hydrogen ions are translocated across the cytoplasmic membrane), and thus conserves the redox energy in a proton gradient. This subunit may bind ubiquinone. The sequence is that of NADH-quinone oxidoreductase subunit H from Rickettsia bellii (strain RML369-C).